Reading from the N-terminus, the 375-residue chain is Succinyl-diaminopimelate desuccinylase (375 aa).

Histidine 66 serves as a coordination point for Zn(2+). The active site involves aspartate 68. Aspartate 99 serves as a coordination point for Zn(2+). Glutamate 133 serves as the catalytic Proton acceptor. Zn(2+)-binding residues include glutamate 134, glutamate 162, and histidine 348.

The protein belongs to the peptidase M20A family. DapE subfamily. As to quaternary structure, homodimer. Zn(2+) serves as cofactor. Co(2+) is required as a cofactor.

The enzyme catalyses N-succinyl-(2S,6S)-2,6-diaminopimelate + H2O = (2S,6S)-2,6-diaminopimelate + succinate. The protein operates within amino-acid biosynthesis; L-lysine biosynthesis via DAP pathway; LL-2,6-diaminopimelate from (S)-tetrahydrodipicolinate (succinylase route): step 3/3. Catalyzes the hydrolysis of N-succinyl-L,L-diaminopimelic acid (SDAP), forming succinate and LL-2,6-diaminopimelate (DAP), an intermediate involved in the bacterial biosynthesis of lysine and meso-diaminopimelic acid, an essential component of bacterial cell walls. This chain is Succinyl-diaminopimelate desuccinylase, found in Pectobacterium atrosepticum (strain SCRI 1043 / ATCC BAA-672) (Erwinia carotovora subsp. atroseptica).